Consider the following 3498-residue polypeptide: Mediator of RNA polymerase II transcription subunit 12 (3498 aa).

Disordered stretches follow at residues 365 to 456 (IKQH…HTDI), 497 to 764 (GGVG…EPEK), 2209 to 2576 (AKKR…AYMK), 2589 to 2620 (ENNR…EAYA), 2637 to 2889 (LRKE…KEKQ), and 2917 to 3498 (NVAG…PNQY). Over residues 368 to 394 (HEKRKAGSLKKSERRRRRGLSKNRPKK) the composition is skewed to basic residues. The segment covering 404-416 (SLDHDKVQIKQEP) has biased composition (basic and acidic residues). Polar residues-rich tracts occupy residues 424–440 (GQQS…SHQY) and 512–536 (SNPT…SASP). The stretch at 539 to 570 (SVDKENECEKKEDESKTKEKNKDKEKDKEKEK) forms a coiled coil. Basic and acidic residues-rich tracts occupy residues 540 to 578 (VDKE…HTND) and 593 to 614 (ANDK…TGKE). Positions 621–630 (SKTAKTSTSA) are enriched in low complexity. 3 stretches are compositionally biased toward basic and acidic residues: residues 691 to 719 (EVDK…KKAD), 738 to 764 (ESEK…EPEK), and 2209 to 2285 (AKKR…KRAS). The tract at residues 2142-3498 (QTTRLDKVAK…YPNQQPPNQY (1357 aa)) is required for nuclear localization. A coiled-coil region spans residues 2203–2290 (VIDEEEAKKR…EKRASDAAAA (88 aa)). Composition is skewed to low complexity over residues 2342-2360 (RADT…APIA) and 2409-2431 (LADA…SSMP). A coiled-coil region spans residues 2395–2420 (RNLLNRKKEEKRNSLADASAAAAAAN). The span at 2444–2456 (QSAGATQQLQGMQ) shows a compositional bias: polar residues. Positions 2459–2479 (QMGGSMSGMNQNMGGMNQSMS) are enriched in low complexity. Residues 2514-2530 (NRSSGPVSSETRQQIME) are compositionally biased toward polar residues. Composition is skewed to basic and acidic residues over residues 2547-2576 (QKQR…AYMK), 2589-2616 (ENNR…RAAE), and 2637-2724 (LRKE…EQQR). Residues 2725 to 2770 (RSQQNPYMNQQGQYSQQPPPSYQQSSYPNNYQPGQQGNQPPNYQQP) are compositionally biased toward low complexity. Polar residues predominate over residues 2771 to 2783 (SHQSMQQGHQAGY). The segment covering 2784 to 2810 (QQTSNQMQMNMQQQQNRQQGGPQQSFS) has biased composition (low complexity). Polar residues-rich tracts occupy residues 2816–2827 (NQPSQPGYSGYN), 2842–2852 (RNPFGNQQDMQ), 2868–2881 (HAQQ…QLSL), and 2926–2956 (GQQQ…SSNP). Positions 2957 to 2993 (QGGMQSYQQQQPVLGQPGPIQTGQSTQQQIPAQSQQQ) are enriched in low complexity. The segment covering 2994–3009 (YNSGRPQMHTTPTKND) has biased composition (polar residues). Positions 3039 to 3100 (GQNVPGGYQQ…NVSQSQSAAQ (62 aa)) are enriched in low complexity. Over residues 3103-3127 (RPSQDSAYQQSGYNQTGNQSYQRPD) the composition is skewed to polar residues. Low complexity-rich tracts occupy residues 3128–3184 (QQQQ…SAQY) and 3192–3223 (QGYD…QTQQ). Over residues 3231 to 3253 (SGYTANSGGSSNILNQSMEESGL) the composition is skewed to polar residues. The span at 3254 to 3311 (NQGFSGASSNASSQQGGSSQMQQSGYGMPGNQMQMQQNQKQQVQRGMPTGMGQTNMGQ) shows a compositional bias: low complexity. Over residues 3312 to 3321 (SGMGQSGMGQ) the composition is skewed to gly residues. Composition is skewed to low complexity over residues 3336-3356 (QGQQ…NQRG) and 3370-3408 (QQQH…QGQQ). Polar residues predominate over residues 3414–3425 (PSQQQSGAAYSN). The segment covering 3426–3436 (QMQFQGVRQGQ) has biased composition (low complexity). Positions 3437-3446 (QGMGGMGGSG) are enriched in gly residues. Positions 3447–3498 (QQQPQTQPHGSNQYYQQQQDQRMQQQPQQPGQQQQHGYGMGQYPNQQPPNQY) are enriched in low complexity.

Belongs to the Mediator complex subunit 12 family. In terms of assembly, component of the Mediator complex. As to expression, ubiquitously expressed.

The protein resides in the nucleus. Its function is as follows. Component of the Mediator complex, a coactivator involved in regulated gene transcription of nearly all RNA polymerase II-dependent genes. Mediator functions as a bridge to convey information from gene-specific regulatory proteins to the basal RNA polymerase II transcription machinery. Mediator is recruited to promoters by direct interactions with regulatory proteins and serves as a scaffold for the assembly of a functional preinitiation complex with RNA polymerase II and the general transcription factors. Functions downstream of let-60 during vulval induction. Required for asymmetric division of T-cells and for hypodermal development. The chain is Mediator of RNA polymerase II transcription subunit 12 (dpy-22) from Caenorhabditis elegans.